The chain runs to 585 residues: Proline--tRNA ligase (585 aa).

The protein belongs to the class-II aminoacyl-tRNA synthetase family. ProS type 1 subfamily. Homodimer.

The protein resides in the cytoplasm. The enzyme catalyses tRNA(Pro) + L-proline + ATP = L-prolyl-tRNA(Pro) + AMP + diphosphate. Functionally, catalyzes the attachment of proline to tRNA(Pro) in a two-step reaction: proline is first activated by ATP to form Pro-AMP and then transferred to the acceptor end of tRNA(Pro). As ProRS can inadvertently accommodate and process non-cognate amino acids such as alanine and cysteine, to avoid such errors it has two additional distinct editing activities against alanine. One activity is designated as 'pretransfer' editing and involves the tRNA(Pro)-independent hydrolysis of activated Ala-AMP. The other activity is designated 'posttransfer' editing and involves deacylation of mischarged Ala-tRNA(Pro). The misacylated Cys-tRNA(Pro) is not edited by ProRS. This chain is Proline--tRNA ligase, found in Mycolicibacterium vanbaalenii (strain DSM 7251 / JCM 13017 / BCRC 16820 / KCTC 9966 / NRRL B-24157 / PYR-1) (Mycobacterium vanbaalenii).